A 489-amino-acid chain; its full sequence is Phosphoglucosamine mutase (489 aa).

Ser-136 functions as the Phosphoserine intermediate in the catalytic mechanism. Ser-136, Asp-275, Asp-277, and Asp-279 together coordinate Mg(2+). Position 136 is a phosphoserine (Ser-136).

This sequence belongs to the phosphohexose mutase family. It depends on Mg(2+) as a cofactor. In terms of processing, activated by phosphorylation.

The enzyme catalyses alpha-D-glucosamine 1-phosphate = D-glucosamine 6-phosphate. Catalyzes the conversion of glucosamine-6-phosphate to glucosamine-1-phosphate. The polypeptide is Phosphoglucosamine mutase (Trichodesmium erythraeum (strain IMS101)).